We begin with the raw amino-acid sequence, 409 residues long: MTEYASSLLRLLSERGYIHQMTDADALDALAAKQVIPGYIGFDPTAPSLHVGSMVQIMLLRRLQQAGHKPIVLMGGGTGKIGDPSFKDEARKLMTNDVIAANVASIKTVFERFLTFGDGPTDAVMVDNADWLDRLEYIPFLREVGQHFSVNRMLSFDSVKQRLDREQSLSFLEFNYMILQAYDFRELSQRHACRLQMGGSDQWGNIVNGIELTRRMDGVEVFGVTTPLLTTADGSKMGKTAAGAVWLNEDALPAWDFWQYWRNTDDRDVGKFLRLFTDLPLDEIARLEALEGSEINAAKVVLANEVTRLVRGEEAAKAAEATAAATFAGGGLGQDLPTLSVGESEIGIVDALVGLGFAASRGEAKRLVAGGGARVDGEPVTDEGFRILVNDKEIRVSSGKKKHGILRKA.

Tyr-39 is a binding site for L-tyrosine. Positions 44–53 (PTAPSLHVGS) match the 'HIGH' region motif. Residues Tyr-176 and Gln-180 each contribute to the L-tyrosine site. Residues 236–240 (KMGKT) carry the 'KMSKS' region motif. Lys-239 is an ATP binding site. The region spanning 346-409 (IGIVDALVGL…KKKHGILRKA (64 aa)) is the S4 RNA-binding domain.

Belongs to the class-I aminoacyl-tRNA synthetase family. TyrS type 1 subfamily. In terms of assembly, homodimer.

It is found in the cytoplasm. It catalyses the reaction tRNA(Tyr) + L-tyrosine + ATP = L-tyrosyl-tRNA(Tyr) + AMP + diphosphate + H(+). Catalyzes the attachment of tyrosine to tRNA(Tyr) in a two-step reaction: tyrosine is first activated by ATP to form Tyr-AMP and then transferred to the acceptor end of tRNA(Tyr). The polypeptide is Tyrosine--tRNA ligase (Novosphingobium aromaticivorans (strain ATCC 700278 / DSM 12444 / CCUG 56034 / CIP 105152 / NBRC 16084 / F199)).